The primary structure comprises 134 residues: Large ribosomal subunit protein uL16c (134 aa).

Residues 1-21 are disordered; it reads MLSPKRTKYRKHHRGRMRGKA.

It belongs to the universal ribosomal protein uL16 family. In terms of assembly, part of the 50S ribosomal subunit.

The protein localises to the plastid. It is found in the chloroplast. This chain is Large ribosomal subunit protein uL16c, found in Chlorella vulgaris (Green alga).